We begin with the raw amino-acid sequence, 369 residues long: Flagellar P-ring protein (369 aa).

The N-terminal stretch at 1–22 is a signal peptide; that stretch reads MIKLKQLIAATLLLSTAFGVHA.

This sequence belongs to the FlgI family. The basal body constitutes a major portion of the flagellar organelle and consists of four rings (L,P,S, and M) mounted on a central rod.

The protein resides in the periplasm. Its subcellular location is the bacterial flagellum basal body. Its function is as follows. Assembles around the rod to form the L-ring and probably protects the motor/basal body from shearing forces during rotation. This Pseudomonas savastanoi pv. phaseolicola (strain 1448A / Race 6) (Pseudomonas syringae pv. phaseolicola (strain 1448A / Race 6)) protein is Flagellar P-ring protein.